Here is a 54-residue protein sequence, read N- to C-terminus: UPF0391 membrane protein Aave_3864 (54 aa).

2 consecutive transmembrane segments (helical) span residues 5 to 25 (AVVF…GIAA) and 28 to 48 (VGIA…TFVL).

The protein belongs to the UPF0391 family.

It localises to the cell membrane. The sequence is that of UPF0391 membrane protein Aave_3864 from Paracidovorax citrulli (strain AAC00-1) (Acidovorax citrulli).